The primary structure comprises 680 residues: Transketolase 1 (680 aa).

Position 30 (His30) interacts with substrate. Thiamine diphosphate is bound by residues His69 and 116 to 118; that span reads GPL. Asp157 is a Mg(2+) binding site. Thiamine diphosphate contacts are provided by Gly158 and Asn187. Mg(2+)-binding residues include Asn187 and Ile189. Substrate is bound at residue His263. His263 provides a ligand contact to thiamine diphosphate. Phosphoserine occurs at positions 286 and 335. 2 residues coordinate substrate: Arg359 and Ser386. Ser402 carries the post-translational modification Phosphoserine. Residues Glu418 and Phe445 each contribute to the thiamine diphosphate site. Catalysis depends on Glu418, which acts as the Proton donor. Residues His469 and Asp477 each contribute to the substrate site. A Phosphoserine modification is found at Ser492. Arg528 contributes to the substrate binding site. Residue Lys647 forms a Glycyl lysine isopeptide (Lys-Gly) (interchain with G-Cter in ubiquitin) linkage.

Belongs to the transketolase family. Homodimer. Mg(2+) is required as a cofactor. Ca(2+) serves as cofactor. The cofactor is Mn(2+). It depends on Co(2+) as a cofactor. Requires thiamine diphosphate as cofactor.

The catalysed reaction is D-sedoheptulose 7-phosphate + D-glyceraldehyde 3-phosphate = aldehydo-D-ribose 5-phosphate + D-xylulose 5-phosphate. Catalyzes the transfer of a two-carbon ketol group from a ketose donor to an aldose acceptor, via a covalent intermediate with the cofactor thiamine pyrophosphate. This is Transketolase 1 (TKL1) from Saccharomyces cerevisiae (strain ATCC 204508 / S288c) (Baker's yeast).